The chain runs to 940 residues: Isoleucine--tRNA ligase (940 aa).

Residues 58-68 (PYANGSIHIGH) carry the 'HIGH' region motif. Glu564 is an L-isoleucyl-5'-AMP binding site. The short motif at 605 to 609 (KMSKS) is the 'KMSKS' region element. Lys608 lines the ATP pocket. Positions 903, 906, 923, and 926 each coordinate Zn(2+).

This sequence belongs to the class-I aminoacyl-tRNA synthetase family. IleS type 1 subfamily. Monomer. The cofactor is Zn(2+).

The protein resides in the cytoplasm. It carries out the reaction tRNA(Ile) + L-isoleucine + ATP = L-isoleucyl-tRNA(Ile) + AMP + diphosphate. Its function is as follows. Catalyzes the attachment of isoleucine to tRNA(Ile). As IleRS can inadvertently accommodate and process structurally similar amino acids such as valine, to avoid such errors it has two additional distinct tRNA(Ile)-dependent editing activities. One activity is designated as 'pretransfer' editing and involves the hydrolysis of activated Val-AMP. The other activity is designated 'posttransfer' editing and involves deacylation of mischarged Val-tRNA(Ile). This chain is Isoleucine--tRNA ligase, found in Shewanella sp. (strain MR-4).